We begin with the raw amino-acid sequence, 418 residues long: MAEIKNYTLNFGPQHPAAHGVLRLVLELDGEVIQRADPHIGLLHRATEKLAEHKTFIQALPYMDRLDYVSMMCNEHAYVMAIEKLLGIEAPLRAQYIRVMFDEITRVLNHLMSLGSHALDVGAMAVFLYAFREREDLMDCYEAVSGARMHAAYYRPGGVYRDLPDTMPQYGDSSKYRGEKEVRAMNDARSGSLLDFIEDFTNRFPSCVDEYETLLTDNRIWKQRLVGIGVVDPDRAKALGFTGPMLRGSGVAWDLRKTQPYEVYDLMDFDVPVGVNGDCYDRYLVRVAEMRESNRIIRQCVEWLRNNPGPVMIENHKIAPPSRTAMKSNMEELIHHFKLFSEGFHVPPGEAYAAVEHPKGEFGIYLVADGANKPYRLKIRAPGFAHLQSLDEMARGHMIADAVTIIGTQDIVFGEIDR.

It belongs to the complex I 49 kDa subunit family. As to quaternary structure, NDH-1 is composed of 14 different subunits. Subunits NuoB, C, D, E, F, and G constitute the peripheral sector of the complex.

It is found in the cell inner membrane. It catalyses the reaction a quinone + NADH + 5 H(+)(in) = a quinol + NAD(+) + 4 H(+)(out). NDH-1 shuttles electrons from NADH, via FMN and iron-sulfur (Fe-S) centers, to quinones in the respiratory chain. The immediate electron acceptor for the enzyme in this species is believed to be ubiquinone. Couples the redox reaction to proton translocation (for every two electrons transferred, four hydrogen ions are translocated across the cytoplasmic membrane), and thus conserves the redox energy in a proton gradient. The protein is NADH-quinone oxidoreductase subunit D of Bordetella pertussis (strain Tohama I / ATCC BAA-589 / NCTC 13251).